The primary structure comprises 27 residues: Conotoxin Lo6/7b (27 aa).

Cystine bridges form between Cys-2–Cys-16, Cys-9–Cys-19, and Cys-15–Cys-26. Position 27 is a tyrosine amide (Tyr-27).

As to expression, expressed by the venom duct.

The protein localises to the secreted. Its function is as follows. 1 uM of this toxin does not show any effect on voltage-gated sodium and potassium channels. Does not show antibacterial activity on both Gram-negative and Gram-positive bacteria. The protein is Conotoxin Lo6/7b of Conasprella longurionis (Cone snail).